We begin with the raw amino-acid sequence, 89 residues long: MAKKSKVAKHEHQQALVEQYAELRRTLKAEGRFDELRKLPRDSSPTRLHNRCELTGRPHGYMRKFGMSRIRFRELAHQGQLPGVKKASW.

It belongs to the universal ribosomal protein uS14 family. Part of the 30S ribosomal subunit. Contacts proteins S3 and S10.

Binds 16S rRNA, required for the assembly of 30S particles and may also be responsible for determining the conformation of the 16S rRNA at the A site. The polypeptide is Small ribosomal subunit protein uS14A (Listeria innocua serovar 6a (strain ATCC BAA-680 / CLIP 11262)).